A 102-amino-acid polypeptide reads, in one-letter code: uncharacterized protein (102 aa).

The span at 1 to 13 (PSSSQALSVPSLS) shows a compositional bias: low complexity. The tract at residues 1–24 (PSSSQALSVPSLSSEKKTASPTCV) is disordered.

This is an uncharacterized protein from Human cytomegalovirus (strain AD169) (HHV-5).